The following is a 355-amino-acid chain: Poly(3-hydroxyalkanoate) polymerase subunit PhaC (355 aa).

One can recognise an AB hydrolase-1 domain in the interval 69 to 334; it reads PLLIVYALVN…LAFPGGHIGI (266 aa). Cysteine 149 is an active-site residue.

The protein belongs to the PHA/PHB synthase family. Type III PhaC subfamily. A large complex of PhaC and PhaE; the ratio of the subunits has been estimated to be from 1:1 to 4:1, with more PhaE than PhaC.

It localises to the cytoplasm. It carries out the reaction (3R)-3-hydroxybutanoyl-CoA + [(3R)-hydroxybutanoate](n) = [(3R)-hydroxybutanoate](n+1) + CoA. The protein operates within biopolymer metabolism; poly-(R)-3-hydroxybutanoate biosynthesis. Its function is as follows. Polymerizes D(-)-3-hydroxybutyryl-CoA to create polyhydroxybutyrate (PHB) which consists of thousands of hydroxybutyrate molecules linked end to end. This subunit has catalytic activity that is enhanced 100-fold by PhaE, the non-catalytic subunit. This is Poly(3-hydroxyalkanoate) polymerase subunit PhaC from Allochromatium vinosum (strain ATCC 17899 / DSM 180 / NBRC 103801 / NCIMB 10441 / D) (Chromatium vinosum).